A 1114-amino-acid chain; its full sequence is Kinesin-like protein KIN-12F (1114 aa).

Positions 1–84 (MADNRIAGSL…RSQVSASRPR (84 aa)) are disordered. Composition is skewed to polar residues over residues 10–39 (LPTSSKWSFLPKSVSSHFKPSSNPRSSNPD) and 48–80 (PNIHNPRNQSVSSKSTAYKNQMDSPNCRSQVSA). In terms of domain architecture, Kinesin motor spans 104-436 (HVKVVVRIKP…LRFGERAKAM (333 aa)). Residue 175–182 (GQNGSGKT) coordinates ATP. Coiled-coil stretches lie at residues 761–791 (QQELEKLCSEQAAKIEQLTRLVGQHKLQTED), 872–942 (ARSF…LRRA), and 1038–1081 (EVLV…HKLE). Residues 1092 to 1114 (NTLPESALQPLHQRNSAIEEEGM) are disordered.

The protein belongs to the TRAFAC class myosin-kinesin ATPase superfamily. Kinesin family. KIN-12 subfamily.

This is Kinesin-like protein KIN-12F from Arabidopsis thaliana (Mouse-ear cress).